Here is a 203-residue protein sequence, read N- to C-terminus: uncharacterized protein (203 aa).

4 helical membrane passes run 9-29, 42-62, 86-106, and 126-146; these read YNVF…IVVA, FLFL…FFDV, SGVF…ALLV, and YPLL…SIGL. Basic and acidic residues-rich tracts occupy residues 164-174 and 182-191; these read GEPTAADKTDS and DQTKSKKDGD. A disordered region spans residues 164 to 203; sequence GEPTAADKTDSRPVVVDLDQTKSKKDGDNPPQASGDMTSL. The span at 194–203 shows a compositional bias: polar residues; that stretch reads PQASGDMTSL.

It is found in the cell membrane. This is an uncharacterized protein from Mycoplasma pneumoniae (strain ATCC 29342 / M129 / Subtype 1) (Mycoplasmoides pneumoniae).